We begin with the raw amino-acid sequence, 255 residues long: Electron transfer flavoprotein subunit beta (255 aa).

At Ala-2 the chain carries N-acetylalanine. AMP is bound by residues Ala-9, 39–42, Cys-66, and 123–134; these read NPFC and GKQAIDDDCNQT. The segment at 183–205 is recognition loop; the sequence is ADLRLNEPRYATLPNIMKAKKKK. Lys-200 is modified (N6,N6,N6-trimethyllysine; by ETFBKMT; alternate). The residue at position 200 (Lys-200) is an N6-acetyllysine; alternate. Lys-200 carries the post-translational modification N6-methyllysine; alternate. The residue at position 203 (Lys-203) is an N6,N6,N6-trimethyllysine; by ETFBKMT. Lys-210 carries the post-translational modification N6-acetyllysine; alternate. Lys-210 is subject to N6-succinyllysine; alternate. Phosphoserine occurs at positions 223 and 226. Lys-238 is subject to N6-acetyllysine. Lys-248 is modified (N6-acetyllysine; alternate). N6-succinyllysine; alternate is present on Lys-248.

Belongs to the ETF beta-subunit/FixA family. In terms of assembly, heterodimer composed of ETFA and ETFB. Identified in a complex that contains ETFA, ETFB and ETFRF1. Interacts with ACADM. Methylated. Trimethylation at Lys-200 and Lys-203 may negatively regulate the activity in electron transfer from acyl-CoA dehydrogenases.

The protein localises to the mitochondrion matrix. In terms of biological role, heterodimeric electron transfer flavoprotein that accepts electrons from several mitochondrial dehydrogenases, including acyl-CoA dehydrogenases, glutaryl-CoA and sarcosine dehydrogenase. It transfers the electrons to the main mitochondrial respiratory chain via ETF-ubiquinone oxidoreductase. Required for normal mitochondrial fatty acid oxidation and normal amino acid metabolism. ETFB binds an AMP molecule that probably has a purely structural role. The chain is Electron transfer flavoprotein subunit beta from Bos taurus (Bovine).